The following is a 158-amino-acid chain: Small ribosomal subunit protein uS19 (158 aa).

The protein belongs to the universal ribosomal protein uS19 family.

In terms of biological role, protein S19 forms a complex with S13 that binds strongly to the 16S ribosomal RNA. The polypeptide is Small ribosomal subunit protein uS19 (Pyrobaculum aerophilum (strain ATCC 51768 / DSM 7523 / JCM 9630 / CIP 104966 / NBRC 100827 / IM2)).